The primary structure comprises 358 residues: Probable G-protein coupled receptor 25 (358 aa).

The Extracellular portion of the chain corresponds to 1–43 (MQSTEPWSPSWGTLSWDYSGSGSLDQVELCPAWNLPYGHAIIP). Residues 44 to 64 (ALYLAAFAVGLPGNAFVVWLL) traverse the membrane as a helical segment. Residues 65 to 76 (SRQRGPRRLVDT) are Cytoplasmic-facing. Residues 77-97 (FVLHLAAADLGFVLTLPLWAA) traverse the membrane as a helical segment. Over 98-113 (AEARGGLWPFGDGLCK) the chain is Extracellular. The cysteines at positions 112 and 191 are disulfide-linked. A helical membrane pass occupies residues 114–134 (VSSFALAVTRCAGALLLAGMS). At 135–155 (VDRYLAVGRPLSARPLRSARC) the chain is on the cytoplasmic side. Residues 156–176 (VRAVCGAAWAAAFLAGLPALL) traverse the membrane as a helical segment. Over 177–200 (YRGLQPSLDGVGSQCAEEPWEALQ) the chain is Extracellular. Residues 201-221 (GVGLLLLLLTFALPLAVTLIC) traverse the membrane as a helical segment. Residues 222 to 239 (YWRVSRRLPRVGRARSNS) lie on the Cytoplasmic side of the membrane. The chain crosses the membrane as a helical span at residues 240–260 (LRIIFTVESVFVGCWLPFGVL). Over 261 to 284 (RSLFHLARLQALPLPCSLLLALRW) the chain is Extracellular. A helical transmembrane segment spans residues 285 to 307 (GLTVTTCLAFVNSSANPVIYLLL). Residues 308–358 (DRSFRARARFGLCARAGRQVRRISSASSLSRDDSSVFRGRSPKVNSASATW) are Cytoplasmic-facing. Positions 339-358 (DDSSVFRGRSPKVNSASATW) are disordered.

It belongs to the G-protein coupled receptor 1 family.

The protein resides in the membrane. Functionally, orphan receptor. This is Probable G-protein coupled receptor 25 (Gpr25) from Mus musculus (Mouse).